Reading from the N-terminus, the 310-residue chain is Glutaminase (310 aa).

Positions 67, 118, 161, 168, 192, 244, and 262 each coordinate substrate.

Belongs to the glutaminase family. In terms of assembly, homotetramer.

It catalyses the reaction L-glutamine + H2O = L-glutamate + NH4(+). The polypeptide is Glutaminase (Legionella pneumophila (strain Paris)).